A 439-amino-acid polypeptide reads, in one-letter code: Glutamate--tRNA ligase 2 (439 aa).

A 'HIGH' region motif is present at residues 6 to 16 (PSPTGDMHIGN). The short motif at 232 to 236 (KMSKR) is the 'KMSKS' region element. K235 contacts ATP.

This sequence belongs to the class-I aminoacyl-tRNA synthetase family. Glutamate--tRNA ligase type 1 subfamily. As to quaternary structure, monomer.

Its subcellular location is the cytoplasm. It carries out the reaction tRNA(Glu) + L-glutamate + ATP = L-glutamyl-tRNA(Glu) + AMP + diphosphate. Functionally, catalyzes the attachment of glutamate to tRNA(Glu) in a two-step reaction: glutamate is first activated by ATP to form Glu-AMP and then transferred to the acceptor end of tRNA(Glu). This chain is Glutamate--tRNA ligase 2, found in Helicobacter pylori (strain Shi470).